We begin with the raw amino-acid sequence, 111 residues long: MKSSAVLKGLQMSPQKARLVADLVRGQPVGKALEILRFTTKKAALPIRKCLESAIANAENNEGADVDALVVEQIMIDGGAVLKRFAARAKGRGSRILKRTSHITVVVAEVY.

Belongs to the universal ribosomal protein uL22 family. In terms of assembly, part of the 50S ribosomal subunit.

Functionally, this protein binds specifically to 23S rRNA; its binding is stimulated by other ribosomal proteins, e.g. L4, L17, and L20. It is important during the early stages of 50S assembly. It makes multiple contacts with different domains of the 23S rRNA in the assembled 50S subunit and ribosome. In terms of biological role, the globular domain of the protein is located near the polypeptide exit tunnel on the outside of the subunit, while an extended beta-hairpin is found that lines the wall of the exit tunnel in the center of the 70S ribosome. In Acidithiobacillus ferrooxidans (strain ATCC 23270 / DSM 14882 / CIP 104768 / NCIMB 8455) (Ferrobacillus ferrooxidans (strain ATCC 23270)), this protein is Large ribosomal subunit protein uL22.